The following is a 116-amino-acid chain: Endocuticle structural glycoprotein SgAbd-4 (116 aa).

Q1 carries the pyrrolidone carboxylic acid modification. In terms of domain architecture, Chitin-binding type R&amp;R spans 20–92; that stretch reads DGSYQWNYET…PQGAHFPTPP (73 aa). Residues T90 and T107 are each glycosylated (O-linked (HexNAc...) threonine). An O-linked (HexNAc...) serine glycan is attached at S110. Residue T111 is glycosylated (O-linked (HexNAc...) threonine). P116 bears the Proline amide mark.

Its function is as follows. Component of the abdominal endocuticle. This chain is Endocuticle structural glycoprotein SgAbd-4, found in Schistocerca gregaria (Desert locust).